The following is a 53-amino-acid chain: MVQYAPFLLGKFSDPLLAIMVGCLSYYVYERKMGRPQGHHLHELIKKRWDDRK.

Residues 7-29 (FLLGKFSDPLLAIMVGCLSYYVY) form a helical membrane-spanning segment.

This sequence belongs to the NCE101 family.

It is found in the membrane. Its function is as follows. Involved in a novel pathway of export of proteins that lack a cleavable signal sequence. May be part of the export machinery or may also be a substrate for non-classical export. The chain is Non-classical export protein 1 (NCE101) from Saccharomyces cerevisiae (strain ATCC 204508 / S288c) (Baker's yeast).